Here is a 236-residue protein sequence, read N- to C-terminus: 5'-methylthioadenosine/S-adenosylhomocysteine nucleosidase (236 aa).

The active-site Proton acceptor is glutamate 12. Residues glycine 78, isoleucine 153, and 174–175 (ME) contribute to the substrate site. Aspartate 198 (proton donor) is an active-site residue.

Belongs to the PNP/UDP phosphorylase family. MtnN subfamily.

The catalysed reaction is S-adenosyl-L-homocysteine + H2O = S-(5-deoxy-D-ribos-5-yl)-L-homocysteine + adenine. It catalyses the reaction S-methyl-5'-thioadenosine + H2O = 5-(methylsulfanyl)-D-ribose + adenine. The enzyme catalyses 5'-deoxyadenosine + H2O = 5-deoxy-D-ribose + adenine. The protein operates within amino-acid biosynthesis; L-methionine biosynthesis via salvage pathway; S-methyl-5-thio-alpha-D-ribose 1-phosphate from S-methyl-5'-thioadenosine (hydrolase route): step 1/2. Its function is as follows. Catalyzes the irreversible cleavage of the glycosidic bond in both 5'-methylthioadenosine (MTA) and S-adenosylhomocysteine (SAH/AdoHcy) to adenine and the corresponding thioribose, 5'-methylthioribose and S-ribosylhomocysteine, respectively. Also cleaves 5'-deoxyadenosine, a toxic by-product of radical S-adenosylmethionine (SAM) enzymes, into 5-deoxyribose and adenine. The chain is 5'-methylthioadenosine/S-adenosylhomocysteine nucleosidase from Shewanella baltica (strain OS185).